Here is an 85-residue protein sequence, read N- to C-terminus: Small ribosomal subunit protein bS16 (85 aa).

It belongs to the bacterial ribosomal protein bS16 family.

In Rubrobacter xylanophilus (strain DSM 9941 / JCM 11954 / NBRC 16129 / PRD-1), this protein is Small ribosomal subunit protein bS16.